The primary structure comprises 877 residues: Alanine--tRNA ligase (877 aa).

Residues H566, H570, C668, and H672 each coordinate Zn(2+).

The protein belongs to the class-II aminoacyl-tRNA synthetase family. It depends on Zn(2+) as a cofactor.

It is found in the cytoplasm. It carries out the reaction tRNA(Ala) + L-alanine + ATP = L-alanyl-tRNA(Ala) + AMP + diphosphate. Functionally, catalyzes the attachment of alanine to tRNA(Ala) in a two-step reaction: alanine is first activated by ATP to form Ala-AMP and then transferred to the acceptor end of tRNA(Ala). Also edits incorrectly charged Ser-tRNA(Ala) and Gly-tRNA(Ala) via its editing domain. This is Alanine--tRNA ligase from Staphylococcus aureus (strain USA300 / TCH1516).